A 270-amino-acid polypeptide reads, in one-letter code: Putative serine acetyltransferase (270 aa).

This sequence belongs to the transferase hexapeptide repeat family.

It is found in the cytoplasm. The protein localises to the nucleus. The enzyme catalyses L-serine + acetyl-CoA = O-acetyl-L-serine + CoA. Its pathway is amino-acid biosynthesis; L-cysteine biosynthesis; L-cysteine from L-serine: step 1/2. The sequence is that of Putative serine acetyltransferase from Schizosaccharomyces pombe (strain 972 / ATCC 24843) (Fission yeast).